Here is a 343-residue protein sequence, read N- to C-terminus: Hydroxymethylglutaryl-CoA synthase (343 aa).

The (3S)-3-hydroxy-3-methylglutaryl-CoA site is built by D28 and A29. The Proton donor/acceptor role is filled by E80. C112 contributes to the (3S)-3-hydroxy-3-methylglutaryl-CoA binding site. C112 functions as the Acyl-thioester intermediate in the catalytic mechanism. R198 contacts CoA. 2 residues coordinate (3S)-3-hydroxy-3-methylglutaryl-CoA: T200 and H233. The active-site Proton donor/acceptor is the H233. K238 serves as a coordination point for CoA. R242, N265, and S295 together coordinate (3S)-3-hydroxy-3-methylglutaryl-CoA.

The protein belongs to the thiolase-like superfamily. Archaeal HMG-CoA synthase family. As to quaternary structure, interacts with acetoacetyl-CoA thiolase that catalyzes the precedent step in the pathway and with a DUF35 protein. The acetoacetyl-CoA thiolase/HMG-CoA synthase complex channels the intermediate via a fused CoA-binding site, which allows for efficient coupling of the endergonic thiolase reaction with the exergonic HMGCS reaction.

The enzyme catalyses acetoacetyl-CoA + acetyl-CoA + H2O = (3S)-3-hydroxy-3-methylglutaryl-CoA + CoA + H(+). Its pathway is metabolic intermediate biosynthesis; (R)-mevalonate biosynthesis; (R)-mevalonate from acetyl-CoA: step 2/3. Its function is as follows. Catalyzes the condensation of acetyl-CoA with acetoacetyl-CoA to form 3-hydroxy-3-methylglutaryl-CoA (HMG-CoA). Functions in the mevalonate (MVA) pathway leading to isopentenyl diphosphate (IPP), a key precursor for the biosynthesis of isoprenoid compounds that are building blocks of archaeal membrane lipids. In Archaeoglobus fulgidus (strain ATCC 49558 / DSM 4304 / JCM 9628 / NBRC 100126 / VC-16), this protein is Hydroxymethylglutaryl-CoA synthase.